The chain runs to 370 residues: Lipoyl synthase, mitochondrial (370 aa).

7 residues coordinate [4Fe-4S] cluster: C104, C109, C115, C135, C139, C142, and S350. The region spanning 118–339 (GGDKSKATAT…KQKALELGFL (222 aa)) is the Radical SAM core domain.

Belongs to the radical SAM superfamily. Lipoyl synthase family. [4Fe-4S] cluster is required as a cofactor.

It localises to the mitochondrion. It catalyses the reaction [[Fe-S] cluster scaffold protein carrying a second [4Fe-4S](2+) cluster] + N(6)-octanoyl-L-lysyl-[protein] + 2 oxidized [2Fe-2S]-[ferredoxin] + 2 S-adenosyl-L-methionine + 4 H(+) = [[Fe-S] cluster scaffold protein] + N(6)-[(R)-dihydrolipoyl]-L-lysyl-[protein] + 4 Fe(3+) + 2 hydrogen sulfide + 2 5'-deoxyadenosine + 2 L-methionine + 2 reduced [2Fe-2S]-[ferredoxin]. The protein operates within protein modification; protein lipoylation via endogenous pathway; protein N(6)-(lipoyl)lysine from octanoyl-[acyl-carrier-protein]: step 2/2. Catalyzes the radical-mediated insertion of two sulfur atoms into the C-6 and C-8 positions of the octanoyl moiety bound to the lipoyl domains of lipoate-dependent enzymes, thereby converting the octanoylated domains into lipoylated derivatives. This is Lipoyl synthase, mitochondrial from Kluyveromyces lactis (strain ATCC 8585 / CBS 2359 / DSM 70799 / NBRC 1267 / NRRL Y-1140 / WM37) (Yeast).